The sequence spans 344 residues: Heat-inducible transcription repressor HrcA (344 aa).

It belongs to the HrcA family.

Functionally, negative regulator of class I heat shock genes (grpE-dnaK-dnaJ and groELS operons). Prevents heat-shock induction of these operons. The chain is Heat-inducible transcription repressor HrcA from Anoxybacillus flavithermus (strain DSM 21510 / WK1).